The chain runs to 591 residues: Aspartate--tRNA(Asp/Asn) ligase (591 aa).

E175 is a binding site for L-aspartate. The interval 199–202 is aspartate; the sequence is QQFK. The L-aspartate site is built by R221 and H453. 221-223 contacts ATP; that stretch reads RDE. An ATP-binding site is contributed by E486. R493 is an L-aspartate binding site. An ATP-binding site is contributed by 538 to 541; it reads GIDR.

This sequence belongs to the class-II aminoacyl-tRNA synthetase family. Type 1 subfamily. Homodimer.

It localises to the cytoplasm. It catalyses the reaction tRNA(Asx) + L-aspartate + ATP = L-aspartyl-tRNA(Asx) + AMP + diphosphate. Aspartyl-tRNA synthetase with relaxed tRNA specificity since it is able to aspartylate not only its cognate tRNA(Asp) but also tRNA(Asn). Reaction proceeds in two steps: L-aspartate is first activated by ATP to form Asp-AMP and then transferred to the acceptor end of tRNA(Asp/Asn). This Roseobacter denitrificans (strain ATCC 33942 / OCh 114) (Erythrobacter sp. (strain OCh 114)) protein is Aspartate--tRNA(Asp/Asn) ligase.